The primary structure comprises 527 residues: Probable bifunctional methylthioribulose-1-phosphate dehydratase/enolase-phosphatase E1 (527 aa).

Positions Met1–Asp244 are methylthioribulose-1-phosphate dehydratase. Position 116 (Cys116) interacts with substrate. His134 and His136 together coordinate Zn(2+). Glu159 acts as the Proton donor/acceptor; for methylthioribulose-1-phosphate dehydratase activity in catalysis. A Zn(2+)-binding site is contributed by His209. Residues Ile288–Ile527 are enolase-phosphatase E1. Mg(2+) is bound by residues Asp291 and Glu293. Substrate is bound by residues Ser426 to Ser427 and Lys460. Position 486 (Asp486) interacts with Mg(2+).

This sequence in the N-terminal section; belongs to the aldolase class II family. MtnB subfamily. It in the C-terminal section; belongs to the HAD-like hydrolase superfamily. MasA/MtnC family. It depends on Zn(2+) as a cofactor. Mg(2+) is required as a cofactor.

It catalyses the reaction 5-(methylsulfanyl)-D-ribulose 1-phosphate = 5-methylsulfanyl-2,3-dioxopentyl phosphate + H2O. The catalysed reaction is 5-methylsulfanyl-2,3-dioxopentyl phosphate + H2O = 1,2-dihydroxy-5-(methylsulfanyl)pent-1-en-3-one + phosphate. It functions in the pathway amino-acid biosynthesis; L-methionine biosynthesis via salvage pathway; L-methionine from S-methyl-5-thio-alpha-D-ribose 1-phosphate: step 2/6. The protein operates within amino-acid biosynthesis; L-methionine biosynthesis via salvage pathway; L-methionine from S-methyl-5-thio-alpha-D-ribose 1-phosphate: step 3/6. Its pathway is amino-acid biosynthesis; L-methionine biosynthesis via salvage pathway; L-methionine from S-methyl-5-thio-alpha-D-ribose 1-phosphate: step 4/6. The polypeptide is Probable bifunctional methylthioribulose-1-phosphate dehydratase/enolase-phosphatase E1 (Ricinus communis (Castor bean)).